The chain runs to 371 residues: Probable L-aspartate decarboxylase (371 aa).

N6-(pyridoxal phosphate)lysine is present on Lys232.

It belongs to the group II decarboxylase family. MfnA subfamily. Pyridoxal 5'-phosphate is required as a cofactor.

The catalysed reaction is L-aspartate + H(+) = beta-alanine + CO2. It functions in the pathway cofactor biosynthesis; coenzyme A biosynthesis. Functionally, catalyzes the decarboxylation of L-aspartate to produce beta-alanine. The sequence is that of Probable L-aspartate decarboxylase from Pyrococcus furiosus (strain ATCC 43587 / DSM 3638 / JCM 8422 / Vc1).